Reading from the N-terminus, the 635-residue chain is DNA primase (635 aa).

The CHC2-type zinc-finger motif lies at 41-65 (CPFHDEKSPSFSVSPAKQMYYCFGC). Residues 265-348 (DEAILVEGYF…SGQVNLRILN (84 aa)) enclose the Toprim domain. 3 residues coordinate Mg(2+): Glu271, Asp317, and Asp319.

It belongs to the DnaG primase family. In terms of assembly, monomer. Interacts with DnaB. Zn(2+) is required as a cofactor. Requires Mg(2+) as cofactor.

It catalyses the reaction ssDNA + n NTP = ssDNA/pppN(pN)n-1 hybrid + (n-1) diphosphate.. Functionally, RNA polymerase that catalyzes the synthesis of short RNA molecules used as primers for DNA polymerase during DNA replication. In Synechocystis sp. (strain ATCC 27184 / PCC 6803 / Kazusa), this protein is DNA primase.